The primary structure comprises 732 residues: Probable boron transporter 3 (732 aa).

An N-acetylmethionine modification is found at methionine 1. At 1–37 (MDEAESFVPFQGIKKDVKGRLNCYKQDWISGLRAGFR) the chain is on the cytoplasmic side. A helical transmembrane segment spans residues 38 to 58 (ILAPTTYIFFASAIPVITFGE). At 59 to 77 (QLERDTDGKITAVQTLVST) the chain is on the extracellular side. The chain crosses the membrane as a helical span at residues 78–98 (ALCGVIHSIIGGQPLLILGVA). Residues 99–123 (EPTVIMYTFMFNFAKSRTDLGSNLF) lie on the Cytoplasmic side of the membrane. Residues 124–144 (LAWTGWVCLWTGLLLFLLAVL) traverse the membrane as a helical segment. The Extracellular portion of the chain corresponds to 145–157 (GACTFINRFTRLA). A helical transmembrane segment spans residues 158–178 (GELFGILIAMLFMQEAIRGIV). Over 179–197 (DEFGVPGRTNPRSAEFQPA) the chain is Cytoplasmic. The helical transmembrane segment at 198–218 (WVFANGMFGLVLSSGLLYTGL) threads the bilayer. Topologically, residues 219–234 (KSRKARSWRFGAEWLR) are extracellular. The helical transmembrane segment at 235-255 (GFIADYGVPVMVVVWTCISYI) threads the bilayer. Residues 256-291 (PWKSVPQGIPRRLVSPNPWSPGAYQNWTVIKEMVDV) are Cytoplasmic-facing. A helical membrane pass occupies residues 292–312 (PVLYILLAVVPASMIAVLYYF). Residues 313-339 (DHSVASQLAQQEDFNLRKPPAYHYDLF) lie on the Extracellular side of the membrane. The helical transmembrane segment at 340-360 (LLGFLTILCGLIGIPPSNGVI) threads the bilayer. Residues 361–463 (PQSPMHTKSL…ILPVEVKEQR (103 aa)) lie on the Cytoplasmic side of the membrane. The chain crosses the membrane as a helical span at residues 464-484 (VSNFLQAMMVAGCVAAMPLIK). At 485 to 556 (RIPSSVLWGY…LFQTAYLLVC (72 aa)) the chain is on the extracellular side. The chain crosses the membrane as a helical span at residues 557–577 (FGITWVPVAGVLFPLMIMFLV). Residues 578–732 (PVRQYVLPNF…QRLSNLGKSV (155 aa)) lie on the Cytoplasmic side of the membrane. Residues 695–732 (GGGEISPRSSAGRAPFSPRSATGGGGGEQRLSNLGKSV) form a disordered region.

It belongs to the anion exchanger (TC 2.A.31.3) family.

The protein resides in the membrane. Its function is as follows. Probable boron transporter. Boron is essential for maintaining the integrity of plants cell walls. This Arabidopsis thaliana (Mouse-ear cress) protein is Probable boron transporter 3 (BOR3).